The primary structure comprises 141 residues: Putative pre-16S rRNA nuclease (141 aa).

The protein belongs to the YqgF nuclease family.

It localises to the cytoplasm. Its function is as follows. Could be a nuclease involved in processing of the 5'-end of pre-16S rRNA. This Dictyoglomus turgidum (strain DSM 6724 / Z-1310) protein is Putative pre-16S rRNA nuclease.